The chain runs to 273 residues: Citrate lyase subunit beta-like protein (273 aa).

Substrate-binding residues include Arg64 and Glu112. Residues Glu112 and Asp138 each coordinate Mg(2+).

It belongs to the HpcH/HpaI aldolase family. Citrate lyase beta subunit-like subfamily. Homotrimer. Requires Mg(2+) as cofactor.

Its function is as follows. May play a role in fatty acid biosynthesis. The sequence is that of Citrate lyase subunit beta-like protein (citE) from Mycobacterium tuberculosis (strain CDC 1551 / Oshkosh).